Consider the following 480-residue polypeptide: UDP-N-acetylmuramate--L-alanine ligase (480 aa).

122 to 128 serves as a coordination point for ATP; that stretch reads GTHGKTT.

The protein belongs to the MurCDEF family.

It is found in the cytoplasm. The enzyme catalyses UDP-N-acetyl-alpha-D-muramate + L-alanine + ATP = UDP-N-acetyl-alpha-D-muramoyl-L-alanine + ADP + phosphate + H(+). The protein operates within cell wall biogenesis; peptidoglycan biosynthesis. Its function is as follows. Cell wall formation. The sequence is that of UDP-N-acetylmuramate--L-alanine ligase from Pseudomonas paraeruginosa (strain DSM 24068 / PA7) (Pseudomonas aeruginosa (strain PA7)).